Here is a 571-residue protein sequence, read N- to C-terminus: Germacrene B synthase TPS16CC (571 aa).

(2E,6E)-farnesyl diphosphate-binding residues include Arg287, Asp324, Asp328, Arg465, and Asp468. Residues Asp324 and Asp328 each coordinate Mg(2+). The DDXXD motif motif lies at 324–328 (DDIYD). Positions 468, 472, and 476 each coordinate Mg(2+).

It belongs to the terpene synthase family. Tpsb subfamily. Requires Mg(2+) as cofactor. Mn(2+) is required as a cofactor. As to expression, highly expressed in glandular trichomes.

It catalyses the reaction (2E,6E)-farnesyl diphosphate = (1E,4E)-germacrene B + diphosphate. The protein operates within secondary metabolite biosynthesis; terpenoid biosynthesis. In terms of biological role, involved in sesquiterpene olefins biosynthesis, constituants of cannabinoids and terpenoids-rich resins. Catalyzes mainly the conversion of (2E)-farnesyl diphosphate to germacrene B, which is spontaneously converted to gamma-elemene as a thermal degradation product. The polypeptide is Germacrene B synthase TPS16CC (Cannabis sativa (Hemp)).